The chain runs to 186 residues: MNIGILGIQGDIEEHEEMIKKINHAPKRIRTIEDLKNIDALIIPGGESSTMGKLMKTYGFIEALKNADLPILGTCAGMVLLSKGTGKEQPLLELMDITINRNAYGSQKYSFESELELNGIKINAVFIRAPTVDKILSDEVEIIAKEGGNIVGVKQGKYMAIAFHPELSEEGYKFYEYFLNEVVKND.

46 to 48 (GES) serves as a coordination point for L-glutamine. Residue Cys-75 is the Nucleophile of the active site. Residues Arg-101 and 127–128 (IR) each bind L-glutamine. Residues His-164 and Glu-166 each act as charge relay system in the active site.

Belongs to the glutaminase PdxT/SNO family. In terms of assembly, in the presence of PdxS, forms a dodecamer of heterodimers. Only shows activity in the heterodimer.

It catalyses the reaction aldehydo-D-ribose 5-phosphate + D-glyceraldehyde 3-phosphate + L-glutamine = pyridoxal 5'-phosphate + L-glutamate + phosphate + 3 H2O + H(+). It carries out the reaction L-glutamine + H2O = L-glutamate + NH4(+). Its pathway is cofactor biosynthesis; pyridoxal 5'-phosphate biosynthesis. Catalyzes the hydrolysis of glutamine to glutamate and ammonia as part of the biosynthesis of pyridoxal 5'-phosphate. The resulting ammonia molecule is channeled to the active site of PdxS. The chain is Pyridoxal 5'-phosphate synthase subunit PdxT from Methanococcus aeolicus (strain ATCC BAA-1280 / DSM 17508 / OCM 812 / Nankai-3).